We begin with the raw amino-acid sequence, 136 residues long: Small ribosomal subunit protein uS8c (136 aa).

It belongs to the universal ribosomal protein uS8 family. Part of the 30S ribosomal subunit.

The protein resides in the plastid. It is found in the chloroplast. Functionally, one of the primary rRNA binding proteins, it binds directly to 16S rRNA central domain where it helps coordinate assembly of the platform of the 30S subunit. The protein is Small ribosomal subunit protein uS8c (rps8) of Saccharum officinarum (Sugarcane).